The following is a 431-amino-acid chain: MPAIVLIGAQWGDEGKGKATDLLGGRVQWVVRYQGGNNAGHTVVLPTGENFALHLIPSGILTPGVTNVIGNGVVVDPGVLLTELRGLEERGVDTERLLISADAHLLMPYHVAIDKVVERYAGSKKIGTTGRGIGPCYQDKIARQGIRVADVLDPAVLAEKIEGALELKNQVLVKIYNRKALEPAEVVENLLEQAEGFKHRIADARLLLNQALERDEIVLLEGSQGTLLDVDHGTYPYVTSSNPTAGGASVGSGIGPTRITTVLGILKAYTTRVGSGPFPTELFDEHGAYLAKTGGEVGVTTGRARRCGWFDAVIARYATRVNGITDYFLTKLDVLSSLETVPICVGYTIDGKRTDEMPMTQSDIARAEPVYEELPGWWEDISGAREFDDLPAKARDYVLRLEELAGAHVSCIGVGPGRDQTIVRRDVLAPS.

GTP contacts are provided by residues 12 to 18 and 40 to 42; these read GDEGKGK and GHT. Residue D13 is the Proton acceptor of the active site. 2 residues coordinate Mg(2+): D13 and G40. IMP is bound by residues 13–16, 38–41, T129, R143, Q224, T239, and R303; these read DEGK and NAGH. H41 (proton donor) is an active-site residue. 299 to 305 is a substrate binding site; it reads VTTGRAR. GTP contacts are provided by residues R305, 331 to 333, and 413 to 415; these read KLD and GVG.

The protein belongs to the adenylosuccinate synthetase family. In terms of assembly, homodimer. It depends on Mg(2+) as a cofactor.

The protein resides in the cytoplasm. It catalyses the reaction IMP + L-aspartate + GTP = N(6)-(1,2-dicarboxyethyl)-AMP + GDP + phosphate + 2 H(+). The protein operates within purine metabolism; AMP biosynthesis via de novo pathway; AMP from IMP: step 1/2. Plays an important role in the de novo pathway of purine nucleotide biosynthesis. Catalyzes the first committed step in the biosynthesis of AMP from IMP. This is Adenylosuccinate synthetase from Mycobacterium sp. (strain KMS).